A 161-amino-acid chain; its full sequence is Crossover junction endodeoxyribonuclease RuvC (161 aa).

Catalysis depends on residues Asp7, Glu67, and Asp140. Positions 7, 67, and 140 each coordinate Mg(2+).

The protein belongs to the RuvC family. As to quaternary structure, homodimer which binds Holliday junction (HJ) DNA. The HJ becomes 2-fold symmetrical on binding to RuvC with unstacked arms; it has a different conformation from HJ DNA in complex with RuvA. In the full resolvosome a probable DNA-RuvA(4)-RuvB(12)-RuvC(2) complex forms which resolves the HJ. The cofactor is Mg(2+).

Its subcellular location is the cytoplasm. It catalyses the reaction Endonucleolytic cleavage at a junction such as a reciprocal single-stranded crossover between two homologous DNA duplexes (Holliday junction).. Functionally, the RuvA-RuvB-RuvC complex processes Holliday junction (HJ) DNA during genetic recombination and DNA repair. Endonuclease that resolves HJ intermediates. Cleaves cruciform DNA by making single-stranded nicks across the HJ at symmetrical positions within the homologous arms, yielding a 5'-phosphate and a 3'-hydroxyl group; requires a central core of homology in the junction. The consensus cleavage sequence is 5'-(A/T)TT(C/G)-3'. Cleavage occurs on the 3'-side of the TT dinucleotide at the point of strand exchange. HJ branch migration catalyzed by RuvA-RuvB allows RuvC to scan DNA until it finds its consensus sequence, where it cleaves and resolves the cruciform DNA. In Natranaerobius thermophilus (strain ATCC BAA-1301 / DSM 18059 / JW/NM-WN-LF), this protein is Crossover junction endodeoxyribonuclease RuvC.